Consider the following 136-residue polypeptide: Nucleoside diphosphate kinase (136 aa).

ATP contacts are provided by Lys10, Phe58, Arg86, Thr92, Arg104, and Asn114. The active-site Pros-phosphohistidine intermediate is His117.

This sequence belongs to the NDK family. In terms of assembly, homotetramer. Mg(2+) is required as a cofactor.

Its subcellular location is the cytoplasm. It catalyses the reaction a 2'-deoxyribonucleoside 5'-diphosphate + ATP = a 2'-deoxyribonucleoside 5'-triphosphate + ADP. It carries out the reaction a ribonucleoside 5'-diphosphate + ATP = a ribonucleoside 5'-triphosphate + ADP. Major role in the synthesis of nucleoside triphosphates other than ATP. The ATP gamma phosphate is transferred to the NDP beta phosphate via a ping-pong mechanism, using a phosphorylated active-site intermediate. The protein is Nucleoside diphosphate kinase of Corynebacterium efficiens (strain DSM 44549 / YS-314 / AJ 12310 / JCM 11189 / NBRC 100395).